The chain runs to 215 residues: MKKVLASATILSLMLVGCSNGGNDESSHKDDSSKTEQKDKSSSQHDSKKDSKRNDTNNKQDNQENNTNKEQTNNQNPNDGEQRTSERPTTNSNGNSSDNQNKQQQSVQDNQNKYVAPYQSENATRVARCLSPFEGDRSQALQQLPNFETALSIAKNEANMYGSENKSYNDYSIEQTEDGFRYVFSFKDPSKSNTYSIVTLNRQGQPTVVDPNFQP.

Residues 1–17 (MKKVLASATILSLMLVG) form the signal peptide. The disordered stretch occupies residues 17–110 (GCSNGGNDES…NKQQQSVQDN (94 aa)). C18 is lipidated: N-palmitoyl cysteine. Residue C18 is the site of S-diacylglycerol cysteine attachment. Positions 25–62 (ESSHKDDSSKTEQKDKSSSQHDSKKDSKRNDTNNKQDN) are enriched in basic and acidic residues. Low complexity-rich tracts occupy residues 63 to 76 (QENN…NNQN) and 91 to 110 (NSNG…VQDN).

The protein resides in the cell membrane. This is an uncharacterized protein from Staphylococcus epidermidis (strain ATCC 35984 / DSM 28319 / BCRC 17069 / CCUG 31568 / BM 3577 / RP62A).